The following is a 66-amino-acid chain: Large ribosomal subunit protein bL33B (66 aa).

Belongs to the bacterial ribosomal protein bL33 family.

The protein is Large ribosomal subunit protein bL33B of Synechococcus sp. (strain CC9605).